The sequence spans 726 residues: Catalase-peroxidase (726 aa).

Residues 1–33 (MSTTDDTHNTLSTGKCPFHQGGHDRSAGAGTAS) form a disordered region. The tryptophyl-tyrosyl-methioninium (Trp-Tyr) (with M-252) cross-link spans 105 to 226 (WHGAGTYRSI…LGATEMGLIY (122 aa)). Catalysis depends on His-106, which acts as the Proton acceptor. Residues 226–252 (YVNPEGPDHSGEPLSAAAAIRATFGNM) constitute a cross-link (tryptophyl-tyrosyl-methioninium (Tyr-Met) (with W-105)). A heme b-binding site is contributed by His-267.

Belongs to the peroxidase family. Peroxidase/catalase subfamily. Homodimer or homotetramer. Heme b serves as cofactor. Post-translationally, formation of the three residue Trp-Tyr-Met cross-link is important for the catalase, but not the peroxidase activity of the enzyme.

The catalysed reaction is H2O2 + AH2 = A + 2 H2O. It carries out the reaction 2 H2O2 = O2 + 2 H2O. Its function is as follows. Bifunctional enzyme with both catalase and broad-spectrum peroxidase activity. In Salmonella typhi, this protein is Catalase-peroxidase.